We begin with the raw amino-acid sequence, 368 residues long: Acetyl-coenzyme A carboxylase carboxyl transferase subunit alpha (368 aa).

The CoA carboxyltransferase C-terminal domain maps to 44–294; the sequence is EIDNKLQEIY…RKSIEKNLNE (251 aa).

Belongs to the AccA family. As to quaternary structure, acetyl-CoA carboxylase is a heterohexamer composed of biotin carboxyl carrier protein (AccB), biotin carboxylase (AccC) and two subunits each of ACCase subunit alpha (AccA) and ACCase subunit beta (AccD).

The protein resides in the cytoplasm. The catalysed reaction is N(6)-carboxybiotinyl-L-lysyl-[protein] + acetyl-CoA = N(6)-biotinyl-L-lysyl-[protein] + malonyl-CoA. It functions in the pathway lipid metabolism; malonyl-CoA biosynthesis; malonyl-CoA from acetyl-CoA: step 1/1. In terms of biological role, component of the acetyl coenzyme A carboxylase (ACC) complex. First, biotin carboxylase catalyzes the carboxylation of biotin on its carrier protein (BCCP) and then the CO(2) group is transferred by the carboxyltransferase to acetyl-CoA to form malonyl-CoA. This chain is Acetyl-coenzyme A carboxylase carboxyl transferase subunit alpha, found in Pelagibacter ubique (strain HTCC1062).